The chain runs to 206 residues: Dehydration-responsive element-binding protein 2D (206 aa).

The tract at residues 13–40 is disordered; it reads ANKKQRTVQASSRKGCMRGKGGPDNASC. A DNA-binding region (AP2/ERF) is located at residues 41 to 98; that stretch reads TYKGVRQRTWGKWVAEIREPNRGARLWLGTFDTSREAALAYDSAARKLYGPEAHLNLP. The tract at residues 102-139 is disordered; sequence RSYPKTASSPASQTTPSSNTGGKSSSDSESPCSSNEMS. Positions 107 to 139 are enriched in low complexity; that stretch reads TASSPASQTTPSSNTGGKSSSDSESPCSSNEMS.

Belongs to the AP2/ERF transcription factor family. ERF subfamily.

The protein localises to the nucleus. Its function is as follows. Putative transcriptional activator that binds specifically to the DNA sequence 5'-[AG]CCGAC-3'. Binding to the C-repeat/DRE element mediates high salinity-inducible transcription. The chain is Dehydration-responsive element-binding protein 2D (DREB2D) from Arabidopsis thaliana (Mouse-ear cress).